We begin with the raw amino-acid sequence, 179 residues long: Repressor of phase 1 flagellin gene (179 aa).

Its function is as follows. Transcriptional repressor of the FliC phase-1 flagellin. This Salmonella typhimurium (strain LT2 / SGSC1412 / ATCC 700720) protein is Repressor of phase 1 flagellin gene (fljA).